Consider the following 876-residue polypeptide: MELPVPSLKDVKWSSASFPLDLLVSSYRLPQLVRVDCAGENVEGLRENDCLLIHSCRQWTTITAHSLEEGHYVIGPKIEIPVHYGGQFKLLEQDRDIKEPVQYFNSVEEVAKAFPERVYVMEEITFNVKVASGECNEDTEVYNITLCTGDELTLMGQAEILYAKTSKEKSRLNTIFKKIGKLNSISKLGKGKMPCLICMNHRTNESISLPFQCKGRFSTRSPLEIQMQEGEHTIRNIVEKTRLPVNVTVPSPPPRNSYDLHFIREGHRYKFVNIQTKTVVVCFALHTNKIVPMHFPLHLSVPKFSLPENLIKGEVWQDSVVQHWYNICQEQFDIEEYSRAVRDVKADWSEECKSPKKNWSAGHSHIPNSLSYARDELTQSFHRLSVCVYGNNLHGNSEVNLHGCRDLCGDWAAFPQDSPQYQDSCDSGSDYLFSETSEELTSLPAKPELPYEELWLEQGSVKRSGQPLTRSQSEKNKCDSFRGSLPSRCGTSSLPSPGALLTTKSLDVSLPPPPVPPKSEAVKEECRLLNAPPVPPRSSKPSSPTPSVPPAAENIVRQQTRSPSPTLSYYSSGLHSIGITESETTSSSDNSQVSCYPCNWMKNESSDLESNLTCGSASSEALPSRLSWPNRYCGGAEGLNVNDLPMDQCRSYYSYPRQKTPGTPKKNSPATFDFGGCGSFTGCNQGEFSDTVPGCPKSASYSLESATDRMLGDNSTKQSLSCPALPPRAPKPSEGNALSEPLSLPMKIDGAEEEIQTCSPDFLEEHYLAKKGVQDIFSISYPFSSPLHMQLAPRSCGDGSPWQPPTDLSGLSVEEVSKSLRFIGLSEDVVSFFVSEKIDGNLLVQLTEEILSEDFKLSKLQVKKLLQFINGWRPKM.

The tract at residues 9–318 (KDVKWSSASF…NLIKGEVWQD (310 aa)) is CABIT. Position 451 is a phosphotyrosine (Tyr451). Disordered stretches follow at residues 460–569 (SVKR…TLSY) and 708–741 (DRML…LSEP). Positions 461–471 (VKRSGQPLTRS) are enriched in polar residues. Pro residues predominate over residues 532–549 (PPVPPRSSKPSSPTPSVP). The segment covering 556–569 (VRQQTRSPSPTLSY) has biased composition (polar residues). An SAM domain is found at 811–876 (LSVEEVSKSL…QFINGWRPKM (66 aa)).

The protein belongs to the GAREM family.

Functionally, adapter protein that may provide a link between cell surface epidermal growth factor receptor and the MAPK/ERK signaling pathway. May promote cell proliferation. The chain is GRB2-associated and regulator of MAPK protein (garem1) from Xenopus laevis (African clawed frog).